A 1687-amino-acid chain; its full sequence is MGQGESTPLSLTLDHWKDVKTRAHNLSVEIRKGKWQTFCSSEWPTFEVGWPPEGTFNPSIISAVKRIVFQETGGHPDQVPYIIVWQDLSNSPPPWVPPLAKIAVASGQDNGRKSAGGRPSAPSRLPIYPETDSLFLLSEPPPYPTSPPPPPAPHAARPAPGLMAEGLGSEGPAAGTRSRRPRSPTGDTGPDSTVALPLRAVGPPAEPNGLVPLQYWPFSSADLYNWKSNHPSFSENPTGLTGLLESLMFSHQPTWDDCQQLLQVLFTTEERERILLEARKNVLGVNGAPTQLENLINEAFPLNRPQWDHNTAEGRERLLVYRRTLVAGLKGAARRPTNLAKVREVLQGPTEPPSVFLERLMEAYRRYTPFDPSSEGQKAAVAMSFIGQSAPDIKKKLQRLEGLQDHSLQDLIKEAEKVYHKRETEEEKQEREKKETEERERRRDRRQEKNLTKILAAVVSEKGFRGRQAGNLSNRAMRAPREGRPPLDKDQCAYCKERGHWARECPRKKNARETNVLTLGDQGSRGSDPLPEPRVTLTVEGIPTEFLVDTGAEHSVLTKPMGKMGSKRTVVAGATGSKVYPWTTKRLLKIGQKQVTHSFLVIPECPAPLLGRDLLTKLKAQIQFSTEGPQVTWEDRPAMCLVLNLEEEYRLHEKPVPPSIDPSWLQLFPMVWAEKAGMGLANQVPPVVVELKSDASPVAVRQYPMSKEAREGIRPHIQRFLDLGILVPCQSPWNTPLLPVKKPGTNDYRPVQDLREVNKRVQDIHPTVPNPYNLLSSLPPSHTWYSVLDLKDAFFCLKLHPNSQPLFAFEWRDPEKGNTGQLTWTRLPQGFKNSPTLFDEALHRDLASFRALNPQVVMLQYVDDLLVAAPTYRDCKEGTRRLLQELSKLGYRVSAKKAQLCREEVTYLGYLLKGGKRWLTPARKATVMKIPTPTTPRQVREFLGTAGFCRLWIPGFASLAAPLYPLTREKVPFTWTEAHQEAFGRIKEALLSAPALALPDLTKPFALYVDEKEGVARGVLTQTLGPWRRPVAYLSKKLDPVASGWPTCLKAIAAVALLLKDADKLTLGQNVLVIAPHNLESIVRQPPDRWMTNARMTHYQSLLLNERVSFAPPAILNPATLLPVESDDTPIHICSEILAEETGTRPDLRDQPLPGVPAWYTDGSSFIMDGRRQAGAAIVDNKRTVWASNLPEGTSAQKAELIALTQALRLAEGKSINIYTDSRYAFATAHVHGAIYKQRGLLTSAGKDIKNKEEILALLEAIHLPKRVAIIHCPGHQRGTDPVATGNRKADEAAKQAAQSTRILTETTKNQEHFEPTRGKIKPRELTPDQGREFIQRLHQLTHLGPDKLLQLVGRTSFHIPNLQSVVREITSKCQVCAVTNAVTTYREPGRRQRGDRPGVYWEVDFTEVKPGRYGNRYLLVFIDTFSGWVEAFPTKTETALTVCKKILEEILPRFGIPKVLGSDNGPAFVAQVSQGLATQLGIDWKLHCAYRPQSSGQVERMNRTIKETLTKLALETGGKDWVTLLPLALLRARNTPGQFGLTPYEILHGGPPPVLASGEVVGSNGDFFPVLFTHLKALEVVRTQIWDQIKEAYRPGTVAIPHPFQVGDRVLVRRHRSGSLEPRWKGPYLVLLTTPTAVKVDGIAAWVHASHLKPAPPGAPDESWELEKTDHPLKLRVRRRRNESTA.

Residue Gly2 is the site of N-myristoyl glycine; by host attachment. Disordered regions lie at residues 107–126, 136–195, 420–447, and 466–485; these read GQDN…SRLP, LLSE…STVA, HKRE…DRRQ, and GRQA…EGRP. A PTAP/PSAP motif motif is present at residues 108 to 111; sequence QDNG. Positions 139–153 are enriched in pro residues; that stretch reads EPPPYPTSPPPPPAP. The PPXY motif signature appears at 140-143; that stretch reads PPPY. Residues 408 to 453 adopt a coiled-coil conformation; the sequence is LQDLIKEAEKVYHKRETEEEKQEREKKETEERERRRDRRQEKNLTK. The segment at 490 to 507 adopts a CCHC-type zinc-finger fold; it reads DQCAYCKERGHWARECPR. The region spanning 544-614 is the Peptidase A2 domain; that stretch reads TEFLVDTGAE…CPAPLLGRDL (71 aa). The Protease; shared with dimeric partner role is filled by Asp549. The region spanning 721 to 912 is the Reverse transcriptase domain; it reads LDLGILVPCQ…EEVTYLGYLL (192 aa). Positions 789, 863, 864, 1162, 1200, 1221, and 1291 each coordinate Mg(2+). Residues 1153-1299 enclose the RNase H type-1 domain; the sequence is LPGVPAWYTD…ADEAAKQAAQ (147 aa). Residues 1339-1377 form an HHCC-type zinc finger; that stretch reads HQLTHLGPDKLLQLVGRTSFHIPNLQSVVREITSKCQVC. The Integrase catalytic domain occupies 1394 to 1552; that stretch reads RGDRPGVYWE…TPYEILHGGP (159 aa). The Mg(2+) site is built by Asp1405 and Asp1464.

As to quaternary structure, homohexamer; further associates as homomultimer. The virus core is composed of a lattice formed from hexagonal rings, each containing six capsid monomers. In terms of assembly, interacts (via PPXY motif) with host NEDD4. Interacts (via PSAP motif) with host TSG101. The reverse transcriptase is a monomer (Potential). Interacts (via RNase domains) with host release factor ETF1; this interaction is essential for translational readthrough of amber codon between viral gag and pol genes, as well as for viral replication. As to quaternary structure, homodimer. Mg(2+) is required as a cofactor. In terms of processing, specific enzymatic cleavages by the viral protease yield mature proteins. The protease is released by autocatalytic cleavage. The polyprotein is cleaved during and after budding, this process is termed maturation. Post-translationally, phosphorylated on serine residues.

Its subcellular location is the virion. It localises to the host cell membrane. The protein localises to the host late endosome membrane. The protein resides in the host endosome. It is found in the host multivesicular body. Its subcellular location is the host cytoplasm. The catalysed reaction is DNA(n) + a 2'-deoxyribonucleoside 5'-triphosphate = DNA(n+1) + diphosphate. It catalyses the reaction Endonucleolytic cleavage to 5'-phosphomonoester.. Its activity is regulated as follows. Protease: Most efficiently inhibited by Amprenavir, which is able to block Gag-Pol processing in infected cells. Functionally, plays a role in budding and is processed by the viral protease during virion maturation outside the cell. During budding, it recruits, in a PPXY-dependent or independent manner, Nedd4-like ubiquitin ligases that conjugate ubiquitin molecules to Gag-Pol, or to Gag-Pol binding host factors. Interaction with HECT ubiquitin ligases probably links the viral protein to the host ESCRT pathway and facilitates release. Targets Gag and gag-pol polyproteins to the plasma membrane via a multipartite membrane binding signal, that includes its myristoylated N-terminus. Also mediates nuclear localization of the pre-integration complex. In terms of biological role, constituent of the pre-integration complex (PIC) which tethers the latter to mitotic chromosomes. This allows the integration of the viral genome into the host DNA. Its function is as follows. Forms the spherical core of the virion that encapsulates the genomic RNA-nucleocapsid complex. Functionally, involved in the packaging and encapsidation of two copies of the genome. Binds with high affinity to conserved UCUG elements within the packaging signal, located near the 5'-end of the genome. This binding is dependent on genome dimerization. Acts as a nucleic acid chaperone which is involved in rearrangement of nucleic acid secondary structures during gRNA retrotranscription. Protease: The aspartyl protease mediates proteolytic cleavages of Gag and Gag-Pol polyproteins during or shortly after the release of the virion from the plasma membrane. Cleavages take place as an ordered, step-wise cascade to yield mature proteins. This process is called maturation. Displays maximal activity during the budding process just prior to particle release from the cell. In terms of biological role, reverse transcriptase/ribonuclease H: RT is a multifunctional enzyme that converts the viral dimeric RNA genome into dsDNA in the cytoplasm, shortly after virus entry into the cell. This enzyme displays a DNA polymerase activity that can copy either DNA or RNA templates, and a ribonuclease H (RNase H) activity that cleaves the RNA strand of RNA-DNA heteroduplexes in a partially processive 3' to 5' endonucleasic mode. Conversion of viral genomic RNA into dsDNA requires many steps. A tRNA binds to the primer-binding site (PBS) situated at the 5' end of the viral RNA. RT uses the 3' end of the tRNA primer to perform a short round of RNA-dependent minus-strand DNA synthesis. The reading proceeds through the U5 region and ends after the repeated (R) region which is present at both ends of viral RNA. The portion of the RNA-DNA heteroduplex is digested by the RNase H, resulting in a ssDNA product attached to the tRNA primer. This ssDNA/tRNA hybridizes with the identical R region situated at the 3' end of viral RNA. This template exchange, known as minus-strand DNA strong stop transfer, can be either intra- or intermolecular. RT uses the 3' end of this newly synthesized short ssDNA to perform the RNA-dependent minus-strand DNA synthesis of the whole template. RNase H digests the RNA template except for a polypurine tract (PPT) situated at the 5' end of the genome. It is not clear if both polymerase and RNase H activities are simultaneous. RNase H probably can proceed both in a polymerase-dependent (RNA cut into small fragments by the same RT performing DNA synthesis) and a polymerase-independent mode (cleavage of remaining RNA fragments by free RTs). Secondly, RT performs DNA-directed plus-strand DNA synthesis using the PPT that has not been removed by RNase H as primers. PPT and tRNA primers are then removed by RNase H. The 3' and 5' ssDNA PBS regions hybridize to form a circular dsDNA intermediate. Strand displacement synthesis by RT to the PBS and PPT ends produces a blunt ended, linear dsDNA copy of the viral genome that includes long terminal repeats (LTRs) at both ends. Its function is as follows. Catalyzes viral DNA integration into the host chromosome, by performing a series of DNA cutting and joining reactions. This enzyme activity takes place after virion entry into a cell and reverse transcription of the RNA genome in dsDNA. The first step in the integration process is 3' processing. This step requires a complex comprising the viral genome, matrix protein and integrase. This complex is called the pre-integration complex (PIC). The integrase protein removes 2 nucleotides from each 3' end of the viral DNA, leaving recessed CA OH's at the 3' ends. In the second step that requires cell division, the PIC enters cell nucleus. In the third step, termed strand transfer, the integrase protein joins the previously processed 3' ends to the 5' ends of strands of target cellular DNA at the site of integration. The last step is viral DNA integration into host chromosome. This Phascolarctos cinereus (Koala) protein is Gag-Pol polyprotein (pro-pol).